The chain runs to 324 residues: tRNA dimethylallyltransferase (324 aa).

17 to 24 is a binding site for ATP; the sequence is GPTASGKT. Position 19 to 24 (19 to 24) interacts with substrate; it reads TASGKT. Interaction with substrate tRNA stretches follow at residues 42 to 45, 166 to 170, 251 to 256, and 284 to 291; these read DSAL, QRIQR, RCVGYR, and KRQITWLR.

It belongs to the IPP transferase family. Monomer. It depends on Mg(2+) as a cofactor.

It catalyses the reaction adenosine(37) in tRNA + dimethylallyl diphosphate = N(6)-dimethylallyladenosine(37) in tRNA + diphosphate. Catalyzes the transfer of a dimethylallyl group onto the adenine at position 37 in tRNAs that read codons beginning with uridine, leading to the formation of N6-(dimethylallyl)adenosine (i(6)A). The chain is tRNA dimethylallyltransferase from Burkholderia lata (strain ATCC 17760 / DSM 23089 / LMG 22485 / NCIMB 9086 / R18194 / 383).